The chain runs to 1284 residues: MNFNNELSDLEKSFLFWTLRVQEYSYDTMHRIDFFLWELQVLNCFLHLQSFTFASECGMLDISQKMLEICKRFNTPPPHNAFAYWKELICKRLCAISIRPDDGFAYWKKVIWKTKQEFRAKYSFPKTLLADNKVDDDDTNPEFVMEFIDAVVGNLNVLVKINDPSSLLFVPGPKEQIEQVLKELKLLRFFVCFVSNKCIEPQYQHTTFYTHALIEASHIAMVVWLNLPIYGNRNQDLASSEVSCLLSNFMEMKIKSIQPGISRNNIYIDVLQALKSTIPQAQKKHAAESGIVEIPTHSLMVGLSDQMANLQEMLCLLKDNLIHLPILDLEFQPQDMDSVIIDAGLLIYSFYDMKGEKEDTTLEDINRELGFDLSRNIEPIKVMIYLVMQKAFQCNLPRIHGLGYVDFLLKNLKDFQGRYSDSFALHKTQIQVIQKEFESLQPFLKVVVEEPHNTFKRLSEDCAIQIIRKAHEVEYVVDACINKGIPHWRLKGWLQIIIEDITCIKEKIQEKNTVDDTMKTVIARTSSKLARTPRMNEEIVGFKDVIENLRNQLLNGTKGQDAISIHGMPGLGKTTLANTLYSDRSVVSQFDICAQCCVSQVYSYKDLLLALLCDAVGEDSDRRELPDNELADMLRKTLLPRRYLILVDDVWDNSAWDDLRGCFPDVNNRSRIILTTRHHEVAKYASVHSDPLHLRMFDKDESWKLLEKKVFGEQSCSPLLKDVGLRIAKMCGQLPLSIVLVAGILSEMEKEVECWEQVANNLGTHIHNDSRAIVNQSYHVLPCHLKSCFLYFGAFLEDEVIDISRLIRLWISESFIKSSEGRRLEDIAEGYLENLIGRNLVMVTQRADSDGKVKACRLHDVLLDFCKERAAEENFLLWINRDQSTNAVYSHKRHAHLAFTEMDSLVEWSASCSLVGSVLLKNYARRPLSSPAFSISHILLNFKFLKVLDLEHQVVIDSIPTELFYLRYLSARIEQNSIPSSISNLWNLETLILKHVSRCTVLLPSTVWDMVKLRHLHIPNFRPENEEALLENSAKLYDLETLSTPYFSRVEDAELMLRKTPNLRKLVCEVECLEYPPQYHVLNFPIRLEILKLYRSKAFNTIPFCISAPNLKYLKLSRSYMDSQYLSETADHLKNLEVLKLYFVKFADHREWKVSNGMFPQLKILKLEYLALMKWIVADDAFPNLEQLVLHECRHLMEIPSCFMDIPSLKYIEVENCNESVVKSAMNIQETQVEDYQNTNFKLVLIGIESISTDTKEKKLTVTRDVDADEVQLVVEKQRKRGML.

A coiled-coil region spans residues 533–555 (PRMNEEIVGFKDVIENLRNQLLN). The region spanning 534–821 (RMNEEIVGFK…SESFIKSSEG (288 aa)) is the NB-ARC domain. 567-574 (GMPGLGKT) lines the ATP pocket. 8 LRR repeats span residues 942–966 (FKFL…LFYL), 985–1010 (LWNL…VWDM), 1013–1036 (LRHL…SAKL), 1085–1107 (PIRL…FCIS), 1108–1135 (APNL…HLKN), 1159–1181 (FPQL…ADDA), 1182–1206 (FPNL…FMDI), and 1219–1243 (ESVV…NFKL). The region spanning 1217–1284 (CNESVVKSAM…VEKQRKRGML (68 aa)) is the HMA domain.

Belongs to the disease resistance NB-LRR family.

It is found in the cytoplasm. The protein resides in the membrane. Functionally, confers resistance to late blight (Phytophthora infestans) races carrying the avirulence gene Avr1. Resistance proteins guard the plant against pathogens that contain an appropriate avirulence protein via an indirect interaction with this avirulence protein. That triggers a defense system including the hypersensitive response, which restricts the pathogen growth. In Solanum demissum (Wild potato), this protein is Putative late blight resistance protein homolog R1B-16 (R1B-16).